We begin with the raw amino-acid sequence, 729 residues long: E3 ubiquitin-protein ligase SH3RF2 (729 aa).

Residues 12–53 (CPVCFEKLDVTAKVLPCQHTFCKPCLQRVFKAHKELRCPECR) form an RING-type zinc finger. A disordered region spans residues 78–105 (SGQSSGRGGSFRRPGTMTLQDGRKSRTN). SH3 domains follow at residues 125-184 (DGVP…VIKQ) and 187-252 (QPPP…PNLT). A disordered region spans residues 258–297 (EKNKGRQSSRTKNLSLVSSSSRGNTSTLRRGPGSRRKVPG). A compositionally biased stretch (polar residues) spans 263–285 (RQSSRTKNLSLVSSSSRGNTSTL). Residues 370–459 (VVSLPGSQQH…RSPGLYTTWT (90 aa)) are interaction with PAK4. In terms of domain architecture, SH3 3 spans 380–441 (LSANMFVALH…PNNYVIPIFR (62 aa)). Disordered stretches follow at residues 497 to 526 (STAGPGTLGQGSLRKGRSSMRKNGSLQRPL) and 610 to 677 (KSEP…SQPE). Over residues 517–526 (RKNGSLQRPL) the composition is skewed to polar residues. The interaction with PPP1CA stretch occupies residues 641-646 (KTVRFQ). Residue S649 is modified to Phosphoserine.

It belongs to the SH3RF family. In terms of assembly, interacts with FASLG and PPP1CA. Interacts with PAK4 and TNFRSF1A. Interacts with DLK1, MAP3K10/MLK2, MAPK8IP1/JIP1, MAPK8IP2/JIP2 and MAPK8IP3/JIP3. Interacts with RAC1 (both active GTP- or inactive GDP-bound forms). Post-translationally, autoubiquitinated. Heart (at protein level). Up-regulated in colon cancer tissues as compared to normal colon tissues (at protein level). Testis. In the heart, present in the apex, left atrium, right atrium, left ventricle and right ventricle, but not in the aorta.

It is found in the nucleus. It catalyses the reaction S-ubiquitinyl-[E2 ubiquitin-conjugating enzyme]-L-cysteine + [acceptor protein]-L-lysine = [E2 ubiquitin-conjugating enzyme]-L-cysteine + N(6)-ubiquitinyl-[acceptor protein]-L-lysine.. It functions in the pathway protein modification; protein ubiquitination. In terms of biological role, has E3 ubiquitin-protein ligase activity. Acts as an anti-apoptotic regulator of the JNK pathway by ubiquitinating and promoting the degradation of SH3RF1, a scaffold protein that is required for pro-apoptotic JNK activation. Facilitates TNF-alpha-mediated recruitment of adapter proteins TRADD and RIPK1 to TNFRSF1A and regulates PAK4 protein stability via inhibition of its ubiquitin-mediated proteasomal degradation. Inhibits PPP1CA phosphatase activity. The protein is E3 ubiquitin-protein ligase SH3RF2 (SH3RF2) of Homo sapiens (Human).